A 400-amino-acid polypeptide reads, in one-letter code: 2-[(L-alanin-3-ylcarbamoyl)methyl]-2-hydroxybutanedioate decarboxylase (400 aa).

Lys-50 is modified (N6-(pyridoxal phosphate)lysine). Residues Gly-228 and 266 to 269 (ECGR) contribute to the pyridoxal 5'-phosphate site. The active-site Proton donor is the Cys-344. Pyridoxal 5'-phosphate is bound at residue Tyr-373.

This sequence belongs to the Orn/Lys/Arg decarboxylase class-II family. As to quaternary structure, homodimer. Requires pyridoxal 5'-phosphate as cofactor.

It carries out the reaction 2-[(L-alanin-3-ylcarbamoyl)methyl]-2-hydroxybutanedioate + H(+) = 2-[(2-aminoethylcarbamoyl)methyl]-2-hydroxybutanedioate + CO2. It participates in siderophore biosynthesis. Its function is as follows. Catalyzes the decarboxylation of citryl-L-2,3-diaminopropionic acid to citryl-diaminoethane, the second step in staphyloferrin B biosynthesis. The chain is 2-[(L-alanin-3-ylcarbamoyl)methyl]-2-hydroxybutanedioate decarboxylase from Staphylococcus aureus (strain NCTC 8325 / PS 47).